The sequence spans 348 residues: Phospho-2-dehydro-3-deoxyheptonate aldolase, Trp-sensitive (348 aa).

This sequence belongs to the class-I DAHP synthase family.

It catalyses the reaction D-erythrose 4-phosphate + phosphoenolpyruvate + H2O = 7-phospho-2-dehydro-3-deoxy-D-arabino-heptonate + phosphate. It functions in the pathway metabolic intermediate biosynthesis; chorismate biosynthesis; chorismate from D-erythrose 4-phosphate and phosphoenolpyruvate: step 1/7. Functionally, stereospecific condensation of phosphoenolpyruvate (PEP) and D-erythrose-4-phosphate (E4P) giving rise to 3-deoxy-D-arabino-heptulosonate-7-phosphate (DAHP). The sequence is that of Phospho-2-dehydro-3-deoxyheptonate aldolase, Trp-sensitive (aroH) from Salmonella typhi.